The following is a 188-amino-acid chain: dCTP deaminase (188 aa).

DCTP contacts are provided by residues 111–116 (KSTYAR), 135–137 (TLE), glutamine 156, tyrosine 170, and glutamine 180. The Proton donor/acceptor role is filled by glutamate 137.

The protein belongs to the dCTP deaminase family. In terms of assembly, homotrimer.

It catalyses the reaction dCTP + H2O + H(+) = dUTP + NH4(+). Its pathway is pyrimidine metabolism; dUMP biosynthesis; dUMP from dCTP (dUTP route): step 1/2. In terms of biological role, catalyzes the deamination of dCTP to dUTP. The polypeptide is dCTP deaminase (Ectopseudomonas mendocina (strain ymp) (Pseudomonas mendocina)).